A 971-amino-acid polypeptide reads, in one-letter code: UPF0182 protein RER_22310 (971 aa).

Helical transmembrane passes span 16–36 (ILLV…RLIG), 61–81 (FVLF…AMLL), 112–132 (LFGV…AQAN), 172–192 (WLFV…YVFG), 209–229 (VQLA…YWFD), 257–277 (AKLI…ASIF), and 286–306 (MAVA…PMIV). The disordered stretch occupies residues 890-927 (GSAATVTQPAPDPDTGAQPETPTTPTAPAPPASSDDVT).

The protein belongs to the UPF0182 family.

The protein resides in the cell membrane. The chain is UPF0182 protein RER_22310 from Rhodococcus erythropolis (strain PR4 / NBRC 100887).